Here is a 2184-residue protein sequence, read N- to C-terminus: Genome polyprotein (2184 aa).

G2 is lipidated: N-myristoyl glycine; by host. At 2–1494 (GAQVSTQKTG…HVSRAFICLQ (1493 aa)) the chain is on the cytoplasmic side. The tract at residues 567 to 583 (FYQGDVQNAVEGAMVRV) is amphipathic alpha-helix. Catalysis depends on for protease 2A activity residues H871 and D889. Zn(2+) contacts are provided by C906 and C908. C960 functions as the For protease 2A activity in the catalytic mechanism. C966 and H968 together coordinate Zn(2+). The membrane-binding stretch occupies residues 1100 to 1172 (NNGWLKKFTE…EQSAPSQGDQ (73 aa)). Residues 1100 to 1238 (NNGWLKKFTE…SPGAGKSVAT (139 aa)) are oligomerization. Residues 1121–1125 (AIKIQ) form an RNA-binding region. Positions 1204–1360 (EKKMSNYIQF…SMYSQNGKIN (157 aa)) constitute an SF3 helicase domain. Positions 1368, 1380, and 1385 each coordinate Zn(2+). The C4-type; degenerate zinc finger occupies 1368 to 1385 (CDEDCCPVNFKKCCPLVC). The RNA-binding stretch occupies residues 1412-1419 (EYNHRHSV). An oligomerization region spans residues 1423–1428 (LEALFQ). Residues 1495 to 1510 (ALTTFVSVAGIIYIIY) lie within the membrane without spanning it. Over 1511–2184 (KLFAGFQGAY…TLRRKWLDSF (674 aa)) the chain is Cytoplasmic. Position 1520 is an O-(5'-phospho-RNA)-tyrosine (Y1520). The Peptidase C3 domain maps to 1540–1718 (GPAFEFAVAM…FSAALLRHYF (179 aa)). Residues H1579, E1610, and C1686 each act as for protease 3C activity in the active site. Residues 1949 to 2065 (GHLIAFDYSG…SYPWPIDASL (117 aa)) enclose the RdRp catalytic domain. D1955 and D2051 together coordinate Mg(2+).

It belongs to the picornaviruses polyprotein family. Interacts with capsid protein VP1 and capsid protein VP3 to form heterotrimeric protomers. In terms of assembly, interacts with capsid protein VP0, and capsid protein VP3 to form heterotrimeric protomers. Five protomers subsequently associate to form pentamers which serve as building blocks for the capsid. Interacts with capsid protein VP2, capsid protein VP3 and capsid protein VP4 following cleavage of capsid protein VP0. As to quaternary structure, interacts with capsid protein VP1 and capsid protein VP3 in the mature capsid. Interacts with capsid protein VP0 and capsid protein VP1 to form heterotrimeric protomers. Five protomers subsequently associate to form pentamers which serve as building blocks for the capsid. Interacts with capsid protein VP4 in the mature capsid. Interacts with protein 2C; this interaction may be important for virion morphogenesis. In terms of assembly, interacts with capsid protein VP1 and capsid protein VP3. As to quaternary structure, homodimer. Homohexamer; forms a hexameric ring structure with 6-fold symmetry characteristic of AAA+ ATPases. Interacts (via N-terminus) with host RTN3 (via reticulon domain); this interaction is important for viral replication. Interacts with capsid protein VP3; this interaction may be important for virion morphogenesis. In terms of assembly, interacts with protein 3CD. As to quaternary structure, homodimer. Interacts with host GBF1. Interacts (via GOLD domain) with host ACBD3 (via GOLD domain); this interaction allows the formation of a viral protein 3A/ACBD3 heterotetramer with a 2:2 stoichiometry, which will stimulate the recruitment of host PI4KB in order to synthesize PI4P at the viral RNA replication sites. Interacts with RNA-directed RNA polymerase. In terms of assembly, interacts with protein 3AB and with RNA-directed RNA polymerase. As to quaternary structure, interacts with Viral protein genome-linked and with protein 3CD. Mg(2+) serves as cofactor. Specific enzymatic cleavages in vivo by the viral proteases yield processing intermediates and the mature proteins. Post-translationally, myristoylation is required for the formation of pentamers during virus assembly. Further assembly of 12 pentamers and a molecule of genomic RNA generates the provirion. In terms of processing, during virion maturation, immature virions are rendered infectious following cleavage of VP0 into VP4 and VP2. This maturation seems to be an autocatalytic event triggered by the presence of RNA in the capsid and it is followed by a conformational change infectious virion. Myristoylation is required during RNA encapsidation and formation of the mature virus particle. Post-translationally, VPg is uridylylated by the polymerase into VPg-pUpU. This acts as a nucleotide-peptide primer for the genomic RNA replication.

It localises to the virion. The protein resides in the host cytoplasm. The protein localises to the host cytoplasmic vesicle membrane. Its subcellular location is the host nucleus. The enzyme catalyses a ribonucleoside 5'-triphosphate + H2O = a ribonucleoside 5'-diphosphate + phosphate + H(+). It catalyses the reaction Selective cleavage of Tyr-|-Gly bond in the picornavirus polyprotein.. The catalysed reaction is RNA(n) + a ribonucleoside 5'-triphosphate = RNA(n+1) + diphosphate. It carries out the reaction Selective cleavage of Gln-|-Gly bond in the poliovirus polyprotein. In other picornavirus reactions Glu may be substituted for Gln, and Ser or Thr for Gly.. With respect to regulation, replication or transcription is subject to high level of random mutations by the nucleotide analog ribavirin. Forms an icosahedral capsid of pseudo T=3 symmetry with capsid proteins VP2 and VP3. The capsid is 300 Angstroms in diameter, composed of 60 copies of each capsid protein and enclosing the viral positive strand RNA genome. Capsid protein VP1 mainly forms the vertices of the capsid. Capsid protein VP1 interacts with host ITGA2/ITGB1 to provide virion attachment to target host cells. This attachment induces virion internalization predominantly through caveolin-mediated endocytosis. Tyrosine kinases are probably involved in the entry process. After binding to its receptor, the capsid undergoes conformational changes. Capsid protein VP1 N-terminus (that contains an amphipathic alpha-helix) and capsid protein VP4 are externalized. Together, they shape a pore in the host membrane through which viral genome is translocated to host cell cytoplasm. In terms of biological role, forms an icosahedral capsid of pseudo T=3 symmetry with capsid proteins VP2 and VP3. The capsid is 300 Angstroms in diameter, composed of 60 copies of each capsid protein and enclosing the viral positive strand RNA genome. Its function is as follows. Lies on the inner surface of the capsid shell. After binding to the host receptor, the capsid undergoes conformational changes. Capsid protein VP4 is released, Capsid protein VP1 N-terminus is externalized, and together, they shape a pore in the host membrane through which the viral genome is translocated into the host cell cytoplasm. Functionally, component of immature procapsids, which is cleaved into capsid proteins VP4 and VP2 after maturation. Allows the capsid to remain inactive before the maturation step. Cysteine protease that cleaves viral polyprotein and specific host proteins. It is responsible for the autocatalytic cleavage between the P1 and P2 regions, which is the first cleavage occurring in the polyprotein. Also cleaves the host translation initiation factor EIF4G1, in order to shut down the capped cellular mRNA translation. Inhibits the host nucleus-cytoplasm protein and RNA trafficking by cleaving host members of the nuclear pores. Counteracts stress granule formation probably by antagonizing its assembly or promoting its dissassembly. In terms of biological role, plays an essential role in the virus replication cycle by acting as a viroporin. Creates a pore in the host endoplasmic reticulum and as a consequence releases Ca2+ in the cytoplasm of infected cell. In turn, high levels of cytoplasmic calcium may trigger membrane trafficking and transport of viral ER-associated proteins to viroplasms, sites of viral genome replication. Its function is as follows. Induces and associates with structural rearrangements of intracellular membranes. Displays RNA-binding, nucleotide binding and NTPase activities. May play a role in virion morphogenesis and viral RNA encapsidation by interacting with the capsid protein VP3. Functionally, localizes the viral replication complex to the surface of membranous vesicles. Together with protein 3CD binds the Cis-Active RNA Element (CRE) which is involved in RNA synthesis initiation. Acts as a cofactor to stimulate the activity of 3D polymerase, maybe through a nucleid acid chaperone activity. Localizes the viral replication complex to the surface of membranous vesicles. It inhibits host cell endoplasmic reticulum-to-Golgi apparatus transport and causes the disassembly of the Golgi complex, possibly through GBF1 interaction. This would result in depletion of MHC, trail receptors and IFN receptors at the host cell surface. Plays an essential role in viral RNA replication by recruiting ACBD3 and PI4KB at the viral replication sites, thereby allowing the formation of the rearranged membranous structures where viral replication takes place. In terms of biological role, acts as a primer for viral RNA replication and remains covalently bound to viral genomic RNA. VPg is uridylylated prior to priming replication into VPg-pUpU. The oriI viral genomic sequence may act as a template for this. The VPg-pUpU is then used as primer on the genomic RNA poly(A) by the RNA-dependent RNA polymerase to replicate the viral genome. During genome replication, the VPg-RNA linkage is removed by the host TDP2, thereby accelerating replication. During the late stage of the replication cycle, host TDP2 is excluded from sites of viral RNA synthesis and encapsidation, allowing for the generation of progeny virions. Its function is as follows. Involved in the viral replication complex and viral polypeptide maturation. It exhibits protease activity with a specificity and catalytic efficiency that is different from protease 3C. Protein 3CD lacks polymerase activity. Protein 3CD binds to the 5'UTR of the viral genome. Functionally, replicates the viral genomic RNA on the surface of intracellular membranes. May form linear arrays of subunits that propagate along a strong head-to-tail interaction called interface-I. Covalently attaches UMP to a tyrosine of VPg, which is used to prime RNA synthesis. The positive stranded RNA genome is first replicated at virus induced membranous vesicles, creating a dsRNA genomic replication form. This dsRNA is then used as template to synthesize positive stranded RNA genomes. ss(+)RNA genomes are either translated, replicated or encapsidated. Major viral protease that mediates proteolytic processing of the polyprotein. Cleaves host EIF5B, contributing to host translation shutoff. Also cleaves host PABPC1, contributing to host translation shutoff. Cleaves host NLRP1, triggers host N-glycine-mediated degradation of the autoinhibitory NLRP1 N-terminal fragment. This is Genome polyprotein from Homo sapiens (Human).